An 81-amino-acid polypeptide reads, in one-letter code: Polcalcin Syr v 3 (81 aa).

2 EF-hand domains span residues 3-38 (EEVA…LGSV) and 41-73 (EEIQ…NSGL). Ca(2+)-binding residues include Asp16, Asn18, Asp20, Lys22, Glu27, Asp51, Asp53, Asp55, and Glu62.

This Syringa vulgaris (Common lilac) protein is Polcalcin Syr v 3 (SYRV3).